The primary structure comprises 227 residues: uncharacterized protein (227 aa).

The next 2 membrane-spanning stretches (helical) occupy residues 7-24 (FVYAVLLVICYLVGVTWA) and 135-157 (VVVIIVIWIISILVIYMLFLMCL).

This sequence belongs to the TMEM9 family.

It is found in the membrane. This is an uncharacterized protein from Drosophila melanogaster (Fruit fly).